Here is a 365-residue protein sequence, read N- to C-terminus: MWLQHLSLKTFRNYKETKIDFNPKLNVFLGRNAQGKTNMLEAIYFLALTRSHRTRTDKNLIHFDEEQLHLSGLVQKKTGSIPLEIELTQKGRVTKVNHLKQARLSDYVGHMNVVLFAPEDLQLIKGAPSIRRKFIDMELGQIKPIYLSDLTNYNHILKQRNTYLKSAQKIDETFLSVLDDQLVDYGCRVMNHRLDFIKKLESFGRKKHFELSNQIEELSISYQSSVNITDKQNLSESFKIALEKSRSRDLFKKNTGVGPHRDDISFYINGMDASFGSQGQHRSLVLSIKLAEIELMESITTESPILLLDDVMSELDNTRQLKLLETISQSIQTFITTTSLDHLQNLPENLSIFTIQDGKASVNGN.

30–37 lines the ATP pocket; it reads GRNAQGKT.

The protein belongs to the RecF family.

Its subcellular location is the cytoplasm. Its function is as follows. The RecF protein is involved in DNA metabolism; it is required for DNA replication and normal SOS inducibility. RecF binds preferentially to single-stranded, linear DNA. It also seems to bind ATP. The protein is DNA replication and repair protein RecF of Streptococcus pneumoniae serotype 2 (strain D39 / NCTC 7466).